We begin with the raw amino-acid sequence, 159 residues long: uncharacterized protein (159 aa).

2 helical membrane-spanning segments follow: residues 17–37 (ALFI…TILV) and 40–60 (LLQF…FKKY).

Its subcellular location is the cell membrane. This is an uncharacterized protein from Borreliella burgdorferi (strain ATCC 35210 / DSM 4680 / CIP 102532 / B31) (Borrelia burgdorferi).